The following is a 485-amino-acid chain: Glutamate--tRNA ligase (485 aa).

The 'HIGH' region signature appears at 11–21 (PSPTGHLHIGG). Residues 252 to 256 (KMSKR) carry the 'KMSKS' region motif. K255 provides a ligand contact to ATP.

It belongs to the class-I aminoacyl-tRNA synthetase family. Glutamate--tRNA ligase type 1 subfamily. In terms of assembly, monomer.

Its subcellular location is the cytoplasm. The enzyme catalyses tRNA(Glu) + L-glutamate + ATP = L-glutamyl-tRNA(Glu) + AMP + diphosphate. Catalyzes the attachment of glutamate to tRNA(Glu) in a two-step reaction: glutamate is first activated by ATP to form Glu-AMP and then transferred to the acceptor end of tRNA(Glu). The sequence is that of Glutamate--tRNA ligase from Halalkalibacterium halodurans (strain ATCC BAA-125 / DSM 18197 / FERM 7344 / JCM 9153 / C-125) (Bacillus halodurans).